The sequence spans 874 residues: Alanine--tRNA ligase (874 aa).

His-562, His-566, Cys-664, and His-668 together coordinate Zn(2+).

Belongs to the class-II aminoacyl-tRNA synthetase family. The cofactor is Zn(2+).

It localises to the cytoplasm. It carries out the reaction tRNA(Ala) + L-alanine + ATP = L-alanyl-tRNA(Ala) + AMP + diphosphate. Functionally, catalyzes the attachment of alanine to tRNA(Ala) in a two-step reaction: alanine is first activated by ATP to form Ala-AMP and then transferred to the acceptor end of tRNA(Ala). Also edits incorrectly charged Ser-tRNA(Ala) and Gly-tRNA(Ala) via its editing domain. The sequence is that of Alanine--tRNA ligase from Neisseria meningitidis serogroup A / serotype 4A (strain DSM 15465 / Z2491).